The primary structure comprises 179 residues: uncharacterized protein (179 aa).

A coiled-coil region spans residues 139 to 172 (IEDLGKYIKSDRIEKEALREELEKILNTLVKHLE).

This is an uncharacterized protein from Methanocaldococcus jannaschii (strain ATCC 43067 / DSM 2661 / JAL-1 / JCM 10045 / NBRC 100440) (Methanococcus jannaschii).